A 689-amino-acid chain; its full sequence is Methionine--tRNA ligase (689 aa).

The 'HIGH' region signature appears at 15-25 (PYANGPIHLGH). Cys-146, Cys-149, Cys-159, and Cys-162 together coordinate Zn(2+). A 'KMSKS' region motif is present at residues 332–336 (KMSKS). Lys-335 is an ATP binding site. A disordered region spans residues 554-574 (DAPKTAAPEKTAEASSVSSEP). In terms of domain architecture, tRNA-binding spans 588–689 (DFAKIDLRIA…EGAQPGMRVK (102 aa)).

It belongs to the class-I aminoacyl-tRNA synthetase family. MetG type 1 subfamily. Homodimer. Requires Zn(2+) as cofactor.

Its subcellular location is the cytoplasm. It catalyses the reaction tRNA(Met) + L-methionine + ATP = L-methionyl-tRNA(Met) + AMP + diphosphate. In terms of biological role, is required not only for elongation of protein synthesis but also for the initiation of all mRNA translation through initiator tRNA(fMet) aminoacylation. This chain is Methionine--tRNA ligase, found in Shewanella baltica (strain OS185).